The primary structure comprises 263 residues: Small ribosomal subunit protein uS3 (263 aa).

One can recognise a KH type-2 domain in the interval 39–107 (VREYLKKKLK…PVHVNIEEIR (69 aa)). Residues 211–263 (GELPPEAATPREEERRPRRAPRGDRPDGARTGRPGGRGRGPRKADAAPAPEGE) form a disordered region. Over residues 219–240 (TPREEERRPRRAPRGDRPDGAR) the composition is skewed to basic and acidic residues.

This sequence belongs to the universal ribosomal protein uS3 family. In terms of assembly, part of the 30S ribosomal subunit. Forms a tight complex with proteins S10 and S14.

Functionally, binds the lower part of the 30S subunit head. Binds mRNA in the 70S ribosome, positioning it for translation. This Bordetella pertussis (strain Tohama I / ATCC BAA-589 / NCTC 13251) protein is Small ribosomal subunit protein uS3.